A 413-amino-acid polypeptide reads, in one-letter code: PCI domain-containing protein 2 homolog (413 aa).

The 182-residue stretch at 222 to 403 (VAYNYFLGRK…QKLVISKMNA (182 aa)) folds into the PCI domain.

Belongs to the CSN12 family.

This is PCI domain-containing protein 2 homolog from Caenorhabditis elegans.